Consider the following 1576-residue polypeptide: Disco-interacting protein 2 homolog B (1576 aa).

Ser-9, Ser-50, and Ser-53 each carry phosphoserine. The DMAP1-binding domain occupies 12-131; the sequence is AVAALPPEVR…PMPTKRRSTF (120 aa). Residues 31-167 are disordered; it reads LSEGDITQKG…AALSAALQQS (137 aa). The segment covering 52–62 has biased composition (polar residues); that stretch reads YSPQTQETDSA. Positions 70–83 are enriched in low complexity; that stretch reads QTPAPSAAQTSAPS. At Thr-71 the chain carries Phosphothreonine. A compositionally biased stretch (basic and acidic residues) spans 92–104; it reads GARDERYRSDIHT. Residue Ser-100 is modified to Phosphoserine. At Thr-140 the chain carries Phosphothreonine. Ser-146, Ser-148, and Ser-153 each carry phosphoserine. Residues 155 to 167 show a composition bias toward low complexity; sequence RRQAALSAALQQS. Phosphoserine occurs at positions 178, 193, and 203. The tract at residues 179-201 is disordered; it reads IQGSSTSSSASSTLSHGEVKGTS. Low complexity predominate over residues 182–193; that stretch reads SSTSSSASSTLS. The disordered stretch occupies residues 217-246; that stretch reads SAPPDVTTTTSSSSSSSSIRPANIDLPPSG. Positions 223-234 are enriched in low complexity; the sequence is TTTTSSSSSSSS. Residue Ser-259 is modified to Phosphoserine.

Belongs to the DIP2 family. As to quaternary structure, interacts with alpha-tubulin. Moderately expressed in adult brain, placenta, skeletal muscle, heart, kidney, pancreas, lung, spleen and colon. Expression was weaker in adult liver, kidney, spleen, and ovary, and in fetal brain and liver. In the brain, it is expressed in the cerebral cortex; the frontal, parietal, occipital and temporal lobes; the paracentral gyrus; the pons; the corpus callosum and the hippocampus. Highest expression levels in the brain were found in the cerebral cortex and the frontal and parietal lobes.

Its subcellular location is the cell projection. The protein resides in the dendrite. It localises to the axon. The protein localises to the perikaryon. In terms of biological role, negatively regulates axonal outgrowth and is essential for normal synaptic transmission. Not required for regulation of axon polarity. Promotes acetylation of alpha-tubulin. In Homo sapiens (Human), this protein is Disco-interacting protein 2 homolog B (DIP2B).